The following is a 294-amino-acid chain: Proteasome subunit beta (294 aa).

A propeptide spans 1–65 (MTADRPALRT…MESGDLAPHG (65 aa)) (removed in mature form; by autocatalysis). The active-site Nucleophile is threonine 66.

It belongs to the peptidase T1B family. The 20S proteasome core is composed of 14 alpha and 14 beta subunits that assemble into four stacked heptameric rings, resulting in a barrel-shaped structure. The two inner rings, each composed of seven catalytic beta subunits, are sandwiched by two outer rings, each composed of seven alpha subunits. The catalytic chamber with the active sites is on the inside of the barrel. Has a gated structure, the ends of the cylinder being occluded by the N-termini of the alpha-subunits. Is capped by the proteasome-associated ATPase, ARC.

Its subcellular location is the cytoplasm. It carries out the reaction Cleavage of peptide bonds with very broad specificity.. The protein operates within protein degradation; proteasomal Pup-dependent pathway. Its activity is regulated as follows. The formation of the proteasomal ATPase ARC-20S proteasome complex, likely via the docking of the C-termini of ARC into the intersubunit pockets in the alpha-rings, may trigger opening of the gate for substrate entry. Interconversion between the open-gate and close-gate conformations leads to a dynamic regulation of the 20S proteasome proteolysis activity. Functionally, component of the proteasome core, a large protease complex with broad specificity involved in protein degradation. In Rhodococcus opacus (strain B4), this protein is Proteasome subunit beta.